A 531-amino-acid polypeptide reads, in one-letter code: 2,3-bisphosphoglycerate-independent phosphoglycerate mutase (531 aa).

Residues Asp13 and Ser63 each contribute to the Mn(2+) site. Ser63 functions as the Phosphoserine intermediate in the catalytic mechanism. Substrate-binding positions include His124, 154–155 (RD), Arg187, Arg193, 261–264 (RPDR), and Lys342. Mn(2+) contacts are provided by Asp420, His424, Asp462, His463, and His480.

It belongs to the BPG-independent phosphoglycerate mutase family. As to quaternary structure, monomer. The cofactor is Mn(2+).

It catalyses the reaction (2R)-2-phosphoglycerate = (2R)-3-phosphoglycerate. It participates in carbohydrate degradation; glycolysis; pyruvate from D-glyceraldehyde 3-phosphate: step 3/5. In terms of biological role, catalyzes the interconversion of 2-phosphoglycerate and 3-phosphoglycerate. The sequence is that of 2,3-bisphosphoglycerate-independent phosphoglycerate mutase from Mycoplasma capricolum subsp. capricolum (strain California kid / ATCC 27343 / NCTC 10154).